We begin with the raw amino-acid sequence, 187 residues long: Orotate phosphoribosyltransferase (187 aa).

5-phospho-alpha-D-ribose 1-diphosphate is bound by residues Arg98, Lys99, Lys102, His104, and 128 to 136; that span reads EDVTTTGGS. The orotate site is built by Thr132 and Arg160.

The protein belongs to the purine/pyrimidine phosphoribosyltransferase family. PyrE subfamily. In terms of assembly, homodimer. The cofactor is Mg(2+).

It catalyses the reaction orotidine 5'-phosphate + diphosphate = orotate + 5-phospho-alpha-D-ribose 1-diphosphate. Its pathway is pyrimidine metabolism; UMP biosynthesis via de novo pathway; UMP from orotate: step 1/2. Functionally, catalyzes the transfer of a ribosyl phosphate group from 5-phosphoribose 1-diphosphate to orotate, leading to the formation of orotidine monophosphate (OMP). The chain is Orotate phosphoribosyltransferase from Rhodopseudomonas palustris (strain TIE-1).